The sequence spans 445 residues: Phosphoglucosamine mutase (445 aa).

Residue Ser102 is the Phosphoserine intermediate of the active site. Mg(2+) contacts are provided by Ser102, Asp241, Asp243, and Asp245. Residue Ser102 is modified to Phosphoserine.

This sequence belongs to the phosphohexose mutase family. Mg(2+) serves as cofactor. Post-translationally, activated by phosphorylation.

It carries out the reaction alpha-D-glucosamine 1-phosphate = D-glucosamine 6-phosphate. Functionally, catalyzes the conversion of glucosamine-6-phosphate to glucosamine-1-phosphate. The sequence is that of Phosphoglucosamine mutase from Shigella flexneri serotype 5b (strain 8401).